The sequence spans 72 residues: Large ribosomal subunit protein uL30 (72 aa).

This sequence belongs to the universal ribosomal protein uL30 family. In terms of assembly, part of the 50S ribosomal subunit.

The sequence is that of Large ribosomal subunit protein uL30 from Mycobacterium ulcerans (strain Agy99).